We begin with the raw amino-acid sequence, 262 residues long: Hemin import ATP-binding protein HmuV (262 aa).

In terms of domain architecture, ABC transporter spans 3–244 (LQARNLTLAR…DHMRRVYGIE (242 aa)). 35–42 (GANGAGKS) contributes to the ATP binding site.

The protein belongs to the ABC transporter superfamily. Heme (hemin) importer (TC 3.A.1.14.5) family. In terms of assembly, the complex is composed of two ATP-binding proteins (HmuV), two transmembrane proteins (HmuU) and a solute-binding protein (HmuT).

Its subcellular location is the cell inner membrane. In terms of biological role, part of the ABC transporter complex HmuTUV involved in hemin import. Responsible for energy coupling to the transport system. The polypeptide is Hemin import ATP-binding protein HmuV (Bordetella pertussis (strain Tohama I / ATCC BAA-589 / NCTC 13251)).